Reading from the N-terminus, the 39-residue chain is Non-specific lipid-transfer protein (39 aa).

The protein belongs to the plant LTP family.

Its function is as follows. Plant non-specific lipid-transfer proteins transfer phospholipids as well as galactolipids across membranes. May play a role in wax or cutin deposition in the cell walls of expanding epidermal cells and certain secretory tissues. In Musa acuminata (Banana), this protein is Non-specific lipid-transfer protein.